The chain runs to 911 residues: Probable 2-oxoadipate dehydrogenase complex component E1 homolog (911 aa).

The protein belongs to the alpha-ketoglutarate dehydrogenase family. It depends on thiamine diphosphate as a cofactor.

It is found in the mitochondrion. The enzyme catalyses N(6)-[(R)-lipoyl]-L-lysyl-[protein] + 2-oxoadipate + H(+) = N(6)-[(R)-S(8)-glutaryldihydrolipoyl]-L-lysyl-[protein] + CO2. Functionally, 2-oxoadipate dehydrogenase (E1a) component of the 2-oxoadipate dehydrogenase complex (OADHC). Participates in the first step, rate limiting for the overall conversion of 2-oxoadipate (alpha-ketoadipate) to glutaryl-CoA and CO(2) catalyzed by the whole OADHC. Catalyzes the irreversible decarboxylation of 2-oxoadipate via the thiamine diphosphate (ThDP) cofactor and subsequent transfer of the decarboxylated acyl intermediate on an oxidized dihydrolipoyl group that is covalently amidated to the E2 enzyme (dihydrolipoyllysine-residue succinyltransferase or DLST). This is Probable 2-oxoadipate dehydrogenase complex component E1 homolog from Caenorhabditis elegans.